The following is a 496-amino-acid chain: Glycerol kinase 2 (496 aa).

Residue Thr-11 participates in ADP binding. ATP contacts are provided by Thr-11, Thr-12, and Ser-13. Residue Thr-11 participates in sn-glycerol 3-phosphate binding. Residue Arg-15 coordinates ADP. Residues Arg-81, Glu-82, Tyr-133, and Asp-242 each contribute to the sn-glycerol 3-phosphate site. Arg-81, Glu-82, Tyr-133, Asp-242, and Gln-243 together coordinate glycerol. The ADP site is built by Thr-264 and Gly-307. Thr-264, Gly-307, Gln-311, and Gly-408 together coordinate ATP. ADP-binding residues include Gly-408 and Asn-412.

This sequence belongs to the FGGY kinase family.

The enzyme catalyses glycerol + ATP = sn-glycerol 3-phosphate + ADP + H(+). It participates in polyol metabolism; glycerol degradation via glycerol kinase pathway; sn-glycerol 3-phosphate from glycerol: step 1/1. Inhibited by fructose 1,6-bisphosphate (FBP). Its function is as follows. Key enzyme in the regulation of glycerol uptake and metabolism. Catalyzes the phosphorylation of glycerol to yield sn-glycerol 3-phosphate. In Thermotoga maritima (strain ATCC 43589 / DSM 3109 / JCM 10099 / NBRC 100826 / MSB8), this protein is Glycerol kinase 2.